We begin with the raw amino-acid sequence, 109 residues long: Cell division protein ZapA (109 aa).

Positions 21-99 (PEQQDALNQA…IEQALLEQGR (79 aa)) form a coiled coil.

It belongs to the ZapA family. Type 1 subfamily. As to quaternary structure, homodimer. Interacts with FtsZ.

Its subcellular location is the cytoplasm. Activator of cell division through the inhibition of FtsZ GTPase activity, therefore promoting FtsZ assembly into bundles of protofilaments necessary for the formation of the division Z ring. It is recruited early at mid-cell but it is not essential for cell division. This chain is Cell division protein ZapA, found in Pectobacterium carotovorum subsp. carotovorum (strain PC1).